We begin with the raw amino-acid sequence, 311 residues long: Pyrimidine-specific ribonucleoside hydrolase RihA (311 aa).

His-240 is an active-site residue.

It belongs to the IUNH family. RihA subfamily.

Hydrolyzes cytidine or uridine to ribose and cytosine or uracil, respectively. This chain is Pyrimidine-specific ribonucleoside hydrolase RihA, found in Klebsiella pneumoniae (strain 342).